The following is a 453-amino-acid chain: Ribulose bisphosphate carboxylase large chain (453 aa).

Residues 1–2 (MS) constitute a propeptide that is removed on maturation. Position 3 is an N-acetylproline (proline 3). Lysine 14 carries the N6,N6,N6-trimethyllysine modification. Substrate contacts are provided by asparagine 123 and threonine 173. The active-site Proton acceptor is the lysine 175. Lysine 177 serves as a coordination point for substrate. The Mg(2+) site is built by lysine 201, aspartate 203, and glutamate 204. Lysine 201 is subject to N6-carboxylysine. The Proton acceptor role is filled by histidine 294. Substrate contacts are provided by arginine 295, histidine 327, and serine 379.

It belongs to the RuBisCO large chain family. Type I subfamily. In terms of assembly, heterohexadecamer of 8 large chains and 8 small chains; disulfide-linked. The disulfide link is formed within the large subunit homodimers. Requires Mg(2+) as cofactor. Post-translationally, the disulfide bond which can form in the large chain dimeric partners within the hexadecamer appears to be associated with oxidative stress and protein turnover.

Its subcellular location is the plastid. The protein resides in the chloroplast. The enzyme catalyses 2 (2R)-3-phosphoglycerate + 2 H(+) = D-ribulose 1,5-bisphosphate + CO2 + H2O. The catalysed reaction is D-ribulose 1,5-bisphosphate + O2 = 2-phosphoglycolate + (2R)-3-phosphoglycerate + 2 H(+). Its function is as follows. RuBisCO catalyzes two reactions: the carboxylation of D-ribulose 1,5-bisphosphate, the primary event in carbon dioxide fixation, as well as the oxidative fragmentation of the pentose substrate in the photorespiration process. Both reactions occur simultaneously and in competition at the same active site. This is Ribulose bisphosphate carboxylase large chain from Rubia tinctorum (Madder).